A 466-amino-acid chain; its full sequence is Vacuolar protein sorting-associated protein 30 (466 aa).

Residues S35 to I55 form a disordered region. Basic and acidic residues predominate over residues D43 to R53. Residues D149 to D258 are a coiled coil. Residues L279–K463 form a BARA region. The segment at W439 to A464 is required for membrane-association, autophagic function during starvation and normal autophagosome morphology.

It belongs to the beclin family. As to quaternary structure, component of the autophagy-specific VPS34 PI3-kinase complex I; and of the VPS34 PI3-kinase complex II.

The protein resides in the endosome membrane. It localises to the vacuole membrane. The protein localises to the preautophagosomal structure membrane. In terms of biological role, required for cytoplasm to vacuole transport (Cvt), autophagy, nucleophagy, and mitophagy, as a part of the autophagy-specific VPS34 PI3-kinase complex I. This complex is essential to recruit the ATG8-phosphatidylinositol conjugate and the ATG12-ATG5 conjugate to the pre-autophagosomal structure. Also involved in endosome-to-Golgi retrograde transport as part of the VPS34 PI3-kinase complex II. This chain is Vacuolar protein sorting-associated protein 30, found in Kluyveromyces marxianus (strain DMKU3-1042 / BCC 29191 / NBRC 104275) (Yeast).